We begin with the raw amino-acid sequence, 345 residues long: tRNA N6-adenosine threonylcarbamoyltransferase (345 aa).

Residues His111 and His115 each contribute to the Fe cation site. Substrate is bound by residues 134-138, Asp167, Gly180, and Asn276; that span reads LVSGG. Asp304 contacts Fe cation.

It belongs to the KAE1 / TsaD family. Fe(2+) is required as a cofactor.

The protein localises to the cytoplasm. It carries out the reaction L-threonylcarbamoyladenylate + adenosine(37) in tRNA = N(6)-L-threonylcarbamoyladenosine(37) in tRNA + AMP + H(+). Its function is as follows. Required for the formation of a threonylcarbamoyl group on adenosine at position 37 (t(6)A37) in tRNAs that read codons beginning with adenine. Is involved in the transfer of the threonylcarbamoyl moiety of threonylcarbamoyl-AMP (TC-AMP) to the N6 group of A37, together with TsaE and TsaB. TsaD likely plays a direct catalytic role in this reaction. This chain is tRNA N6-adenosine threonylcarbamoyltransferase, found in Alcanivorax borkumensis (strain ATCC 700651 / DSM 11573 / NCIMB 13689 / SK2).